The sequence spans 198 residues: Superoxide dismutase [Mn], mitochondrial (198 aa).

Position 26 (histidine 26) interacts with Mn(2+). Tyrosine 34 carries the 3'-nitrotyrosine modification. Lysine 44 and lysine 51 each carry N6-acetyllysine; alternate. Lysine 44 and lysine 51 each carry N6-succinyllysine; alternate. Histidine 74 is a binding site for Mn(2+). Lysine 90 carries the post-translational modification N6-acetyllysine. 2 positions are modified to N6-acetyllysine; alternate: lysine 98 and lysine 106. Residues lysine 98 and lysine 106 each carry the N6-succinyllysine; alternate modification. Residues aspartate 159 and histidine 163 each coordinate Mn(2+). Lysine 178 carries the N6-acetyllysine modification.

Belongs to the iron/manganese superoxide dismutase family. In terms of assembly, homotetramer. Mn(2+) is required as a cofactor. Nitrated under oxidative stress. Nitration coupled with oxidation inhibits the catalytic activity. Post-translationally, acetylation at Lys-98 decreases enzymatic activity. Deacetylated by SIRT3 upon exposure to ionizing radiations or after long fasting. In terms of processing, polyubiquitinated; leading to proteasomal degradation. Deubiquitinated by USP36 which increases protein stability.

It localises to the mitochondrion matrix. The enzyme catalyses 2 superoxide + 2 H(+) = H2O2 + O2. Its function is as follows. Destroys superoxide anion radicals which are normally produced within the cells and which are toxic to biological systems. The chain is Superoxide dismutase [Mn], mitochondrial (SOD2) from Hylobates lar (Lar gibbon).